Consider the following 451-residue polypeptide: tRNA-2-methylthio-N(6)-dimethylallyladenosine synthase (451 aa).

Positions 11–127 (RHYHITTFGC…LEDLLQQVFD (117 aa)) constitute an MTTase N-terminal domain. Positions 20, 56, 90, 162, 166, and 169 each coordinate [4Fe-4S] cluster. The 238-residue stretch at 148–385 (RDSTITAWVN…NHLVAQKAAE (238 aa)) folds into the Radical SAM core domain. In terms of domain architecture, TRAM spans 388 to 451 (QRYLGRIEEV…RAFSLTGEIV (64 aa)).

Belongs to the methylthiotransferase family. MiaB subfamily. As to quaternary structure, monomer. Requires [4Fe-4S] cluster as cofactor.

It localises to the cytoplasm. It carries out the reaction N(6)-dimethylallyladenosine(37) in tRNA + (sulfur carrier)-SH + AH2 + 2 S-adenosyl-L-methionine = 2-methylsulfanyl-N(6)-dimethylallyladenosine(37) in tRNA + (sulfur carrier)-H + 5'-deoxyadenosine + L-methionine + A + S-adenosyl-L-homocysteine + 2 H(+). Catalyzes the methylthiolation of N6-(dimethylallyl)adenosine (i(6)A), leading to the formation of 2-methylthio-N6-(dimethylallyl)adenosine (ms(2)i(6)A) at position 37 in tRNAs that read codons beginning with uridine. This Rippkaea orientalis (strain PCC 8801 / RF-1) (Cyanothece sp. (strain PCC 8801)) protein is tRNA-2-methylthio-N(6)-dimethylallyladenosine synthase.